Here is a 141-residue protein sequence, read N- to C-terminus: Large ribosomal subunit protein uL11 (141 aa).

The protein belongs to the universal ribosomal protein uL11 family. In terms of assembly, part of the ribosomal stalk of the 50S ribosomal subunit. Interacts with L10 and the large rRNA to form the base of the stalk. L10 forms an elongated spine to which L12 dimers bind in a sequential fashion forming a multimeric L10(L12)X complex. Post-translationally, one or more lysine residues are methylated.

Functionally, forms part of the ribosomal stalk which helps the ribosome interact with GTP-bound translation factors. This chain is Large ribosomal subunit protein uL11, found in Phytoplasma australiense.